Here is a 380-residue protein sequence, read N- to C-terminus: Kappa-type opioid receptor (380 aa).

At 1 to 57 the chain is on the extracellular side; that stretch reads MESPIQIFRGDPGPTCSPSACLLPNSSSWFPNWAESDSNGSVGSEDQQLESAHISPA. 2 N-linked (GlcNAc...) asparagine glycosylation sites follow: Asn25 and Asn39. A helical transmembrane segment spans residues 58-85; it reads IPVIITAVYSVVFVVGLVGNSLVMFVII. Topologically, residues 86–95 are cytoplasmic; sequence RYTKMKTATN. The chain crosses the membrane as a helical span at residues 96–119; it reads IYIFNLALADALVTTTMPFQSAVY. Topologically, residues 120-132 are extracellular; the sequence is LMNSWPFGDVLCK. Cys131 and Cys210 are disulfide-bonded. The helical transmembrane segment at 133 to 154 threads the bilayer; the sequence is IVISIDYYNMFTSIFTLTMMSV. The Cytoplasmic portion of the chain corresponds to 155-173; the sequence is DRYIAVCHPVKALDFRTPL. Residues 174-196 traverse the membrane as a helical segment; it reads KAKIINICIWLLASSVGISAIVL. Topologically, residues 197 to 222 are extracellular; the sequence is GGTKVREDVDVIECSLQFPDDEYSWW. A helical membrane pass occupies residues 223–247; the sequence is DLFMKICVFVFAFVIPVLIIIVCYT. The Cytoplasmic portion of the chain corresponds to 248–274; that stretch reads LMILRLKSVRLLSGSREKDRNLRRITK. Residues 275–296 form a helical membrane-spanning segment; sequence LVLVVVAVFIICWTPIHIFILV. The Extracellular segment spans residues 297-311; the sequence is EALGSTSHSTAALSS. Residues 312-333 form a helical membrane-spanning segment; that stretch reads YYFCIALGYTNSSLNPVLYAFL. Over 334–380 the chain is Cytoplasmic; the sequence is DENFKRCFRDFCFPIKMRMERQSTNRVRNTVQDPASMRDVGGMNKPV. Residue Cys345 is the site of S-palmitoyl cysteine attachment.

Belongs to the G-protein coupled receptor 1 family. In terms of assembly, interacts with NHERF1. Interacts with GABARAPL1. Detected in brain (at protein level). Brain (neocortex, hippocampus, amygdala, medial habenula, hypothalamus, locus ceruleus, and parabrachial nucleus).

The protein resides in the cell membrane. Its function is as follows. G-protein coupled opioid receptor that functions as a receptor for endogenous alpha-neoendorphins and dynorphins, but has low affinity for beta-endorphins. Also functions as a receptor for various synthetic opioids and for the psychoactive diterpene salvinorin A. Ligand binding causes a conformation change that triggers signaling via guanine nucleotide-binding proteins (G proteins) and modulates the activity of down-stream effectors, such as adenylate cyclase. Signaling leads to the inhibition of adenylate cyclase activity. Inhibits neurotransmitter release by reducing calcium ion currents and increasing potassium ion conductance. Plays a role in the perception of pain. Plays a role in mediating reduced physical activity upon treatment with synthetic opioids. Plays a role in the regulation of salivation in response to synthetic opioids. May play a role in arousal and regulation of autonomic and neuroendocrine functions. In Mus musculus (Mouse), this protein is Kappa-type opioid receptor (Oprk1).